Reading from the N-terminus, the 90-residue chain is Secretory calcium-binding phosphoprotein proline-glutamine-rich 1 (90 aa).

The N-terminal stretch at 1–15 (MQLFLLAALLSAAAA) is a signal peptide.

In terms of tissue distribution, expressed in enamel organ.

The protein resides in the secreted. Its function is as follows. Tooth-associated epithelia protein that may participate in structuring the basal lamina at cell-tooth interface. In Mus musculus (Mouse), this protein is Secretory calcium-binding phosphoprotein proline-glutamine-rich 1.